Here is a 167-residue protein sequence, read N- to C-terminus: RNA pyrophosphohydrolase (167 aa).

In terms of domain architecture, Nudix hydrolase spans 8–158 (PYRTCVGMML…KRPVYERVVK (151 aa)). The Nudix box motif lies at 47–68 (GGVDPGEDTWEAAKRELYEETN).

Belongs to the Nudix hydrolase family. RppH subfamily. Requires a divalent metal cation as cofactor.

Its function is as follows. Accelerates the degradation of transcripts by removing pyrophosphate from the 5'-end of triphosphorylated RNA, leading to a more labile monophosphorylated state that can stimulate subsequent ribonuclease cleavage. This Rhodopseudomonas palustris (strain HaA2) protein is RNA pyrophosphohydrolase.